A 660-amino-acid chain; its full sequence is DNA mismatch repair protein MutL (660 aa).

The protein belongs to the DNA mismatch repair MutL/HexB family.

Functionally, this protein is involved in the repair of mismatches in DNA. It is required for dam-dependent methyl-directed DNA mismatch repair. May act as a 'molecular matchmaker', a protein that promotes the formation of a stable complex between two or more DNA-binding proteins in an ATP-dependent manner without itself being part of a final effector complex. In Streptococcus equi subsp. zooepidemicus (strain H70), this protein is DNA mismatch repair protein MutL.